A 1386-amino-acid polypeptide reads, in one-letter code: DNA-directed RNA polymerase subunit beta' (1386 aa).

Zn(2+) is bound by residues C75, C77, C90, and C93. Residues D466, D468, and D470 each contribute to the Mg(2+) site. Zn(2+) contacts are provided by C809, C883, C890, and C893.

This sequence belongs to the RNA polymerase beta' chain family. The RNAP catalytic core consists of 2 alpha, 1 beta, 1 beta' and 1 omega subunit. When a sigma factor is associated with the core the holoenzyme is formed, which can initiate transcription. Mg(2+) is required as a cofactor. It depends on Zn(2+) as a cofactor.

It carries out the reaction RNA(n) + a ribonucleoside 5'-triphosphate = RNA(n+1) + diphosphate. DNA-dependent RNA polymerase catalyzes the transcription of DNA into RNA using the four ribonucleoside triphosphates as substrates. This chain is DNA-directed RNA polymerase subunit beta', found in Oleidesulfovibrio alaskensis (strain ATCC BAA-1058 / DSM 17464 / G20) (Desulfovibrio alaskensis).